A 303-amino-acid chain; its full sequence is Ribosomal large subunit pseudouridine synthase C (303 aa).

The S4 RNA-binding domain maps to 11 to 87; sequence FRLDKYLKRL…AEIKLAKKIL (77 aa). Residue Asp140 is part of the active site.

This sequence belongs to the pseudouridine synthase RluA family.

It carries out the reaction uridine(955/2504/2580) in 23S rRNA = pseudouridine(955/2504/2580) in 23S rRNA. Responsible for synthesis of pseudouridine from uracil at positions 955, 2504 and 2580 in 23S ribosomal RNA. The protein is Ribosomal large subunit pseudouridine synthase C (rluC) of Rickettsia prowazekii (strain Madrid E).